Reading from the N-terminus, the 94-residue chain is Putative pterin-4-alpha-carbinolamine dehydratase (94 aa).

The protein belongs to the pterin-4-alpha-carbinolamine dehydratase family.

The enzyme catalyses (4aS,6R)-4a-hydroxy-L-erythro-5,6,7,8-tetrahydrobiopterin = (6R)-L-erythro-6,7-dihydrobiopterin + H2O. This Mycobacterium sp. (strain KMS) protein is Putative pterin-4-alpha-carbinolamine dehydratase.